We begin with the raw amino-acid sequence, 344 residues long: Ribosomal RNA large subunit methyltransferase Cfr (344 aa).

Glutamate 90 (proton acceptor) is an active-site residue. Positions lysine 97–glutamate 330 constitute a Radical SAM core domain. Cysteine 104 and cysteine 335 are oxidised to a cystine. [4Fe-4S] cluster contacts are provided by cysteine 111, cysteine 115, and cysteine 118. Residues glycine 157–glutamate 158, serine 188, serine 211–histidine 213, and asparagine 292 contribute to the S-adenosyl-L-methionine site. Cysteine 335 acts as the S-methylcysteine intermediate in catalysis.

It belongs to the radical SAM superfamily. RlmN family. Cfr subfamily. It depends on [4Fe-4S] cluster as a cofactor.

It localises to the cytoplasm. The enzyme catalyses adenosine(2503) in 23S rRNA + 2 reduced [2Fe-2S]-[ferredoxin] + 2 S-adenosyl-L-methionine = 8-methyladenosine(2503) in 23S rRNA + 5'-deoxyadenosine + L-methionine + 2 oxidized [2Fe-2S]-[ferredoxin] + S-adenosyl-L-homocysteine. In terms of biological role, specifically methylates position 8 of adenine 2503 in 23S rRNA. Confers resistance to some classes of antibiotics. The protein is Ribosomal RNA large subunit methyltransferase Cfr of Clostridium botulinum (strain Okra / Type B1).